The primary structure comprises 212 residues: Thymidylate kinase (212 aa).

Residue 11–18 (GPEGAGKT) coordinates ATP.

The protein belongs to the thymidylate kinase family.

The catalysed reaction is dTMP + ATP = dTDP + ADP. Phosphorylation of dTMP to form dTDP in both de novo and salvage pathways of dTTP synthesis. In Streptococcus pneumoniae serotype 19F (strain G54), this protein is Thymidylate kinase.